A 238-amino-acid polypeptide reads, in one-letter code: MSHCGAPSVPEPEKKVPWQYFTSALWQYNVALVQMLALCPTLAVTTTATNGLGMGLATTLVLVMTNALISSMRHTISPEVRNPVMIGVIAGVVTLTDMAMNAWMHELYKVLGLFIALIVTNCAVLGRAESFCLRNPVIPSILDGAGMGAGFTAVLVVIGGIREILGSGTLFSQASSLLGSHFKWMEITVIPDFQGILLAILPPGAFIVLGFLLAAKRVIDRKRAERRQQTHGELVVLQ.

6 helical membrane passes run 24–44 (ALWQ…TLAV), 52–72 (LGMG…ISSM), 84–104 (VMIG…NAWM), 106–126 (ELYK…AVLG), 141–161 (ILDG…IGGI), and 195–215 (GILL…LLAA).

It belongs to the NqrDE/RnfAE family. In terms of assembly, the complex is composed of six subunits: RnfA, RnfB, RnfC, RnfD, RnfE and RnfG.

The protein localises to the cell inner membrane. Part of a membrane-bound complex that couples electron transfer with translocation of ions across the membrane. This Azotobacter vinelandii (strain DJ / ATCC BAA-1303) protein is Ion-translocating oxidoreductase complex subunit E.